A 228-amino-acid chain; its full sequence is U1 small nuclear ribonucleoprotein C (228 aa).

The Matrin-type zinc-finger motif lies at 4–36 (YYCEYCDIYLTHSSPVGRRQHVQGRKHISAKIE). A compositionally biased stretch (basic and acidic residues) spans 179 to 190 (LVKDNPNEERNG). The disordered stretch occupies residues 179–228 (LVKDNPNEERNGDSAIANQPSTMHHEEDQDDPANATGGTANNNDNVSINA). Residues 211–221 (ANATGGTANNN) are compositionally biased toward low complexity.

It belongs to the U1 small nuclear ribonucleoprotein C family. As to quaternary structure, U1 snRNP is composed of the 7 core Sm proteins B/B', D1, D2, D3, E, F and G that assemble in a heptameric protein ring on the Sm site of the small nuclear RNA to form the core snRNP, and at least 3 U1 snRNP-specific proteins U1-70K, U1-A and U1-C. U1-C interacts with U1 snRNA and the 5' splice-site region of the pre-mRNA.

The protein localises to the nucleus. Component of the spliceosomal U1 snRNP, which is essential for recognition of the pre-mRNA 5' splice-site and the subsequent assembly of the spliceosome. U1-C is directly involved in initial 5' splice-site recognition for both constitutive and regulated alternative splicing. The interaction with the 5' splice-site seems to precede base-pairing between the pre-mRNA and the U1 snRNA. Stimulates commitment or early (E) complex formation by stabilizing the base pairing of the 5' end of the U1 snRNA and the 5' splice-site region. This Plasmodium knowlesi (strain H) protein is U1 small nuclear ribonucleoprotein C.